We begin with the raw amino-acid sequence, 394 residues long: Protein-glutamate methylesterase/protein-glutamine glutaminase (394 aa).

The tract at residues 1–24 (MSDGFGRPPPPAPAGHPTGAAGGD) is disordered. Over residues 15 to 24 (GHPTGAAGGD) the composition is skewed to low complexity. The Response regulatory domain occupies 27–145 (RVMVVDDSAV…EIGGADAFKR (119 aa)). Residue aspartate 78 is modified to 4-aspartylphosphate. In terms of domain architecture, CheB-type methylesterase spans 191-393 (PAPAVGSVGQ…PYIRKFASRA (203 aa)). Catalysis depends on residues serine 211, histidine 238, and aspartate 335.

This sequence belongs to the CheB family. Phosphorylated by CheA. Phosphorylation of the N-terminal regulatory domain activates the methylesterase activity.

The protein localises to the cytoplasm. It catalyses the reaction [protein]-L-glutamate 5-O-methyl ester + H2O = L-glutamyl-[protein] + methanol + H(+). It carries out the reaction L-glutaminyl-[protein] + H2O = L-glutamyl-[protein] + NH4(+). Involved in chemotaxis. Part of a chemotaxis signal transduction system that modulates chemotaxis in response to various stimuli. Catalyzes the demethylation of specific methylglutamate residues introduced into the chemoreceptors (methyl-accepting chemotaxis proteins or MCP) by CheR. Also mediates the irreversible deamidation of specific glutamine residues to glutamic acid. The polypeptide is Protein-glutamate methylesterase/protein-glutamine glutaminase (Azospirillum brasilense).